A 284-amino-acid chain; its full sequence is GPN-loop GTPase 3 (284 aa).

13–18 (GSGKST) contacts GTP. A Gly-Pro-Asn (GPN)-loop; involved in dimer interface motif is present at residues 72–74 (GPN). Position 174-177 (174-177 (TKMD)) interacts with GTP. The tract at residues 261–284 (KEPKEHEEESSSMFDEYFQERQNE) is disordered.

It belongs to the GPN-loop GTPase family. As to quaternary structure, heterodimer with GPN1. Binds to RNA polymerase II (RNAPII). Interacts directly with subunits RPB4 and RPB7 and the CTD of RPB1.

Functionally, small GTPase required for proper localization of RNA polymerase II (RNAPII). May act at an RNAP assembly step prior to nuclear import. The chain is GPN-loop GTPase 3 from Rattus norvegicus (Rat).